The primary structure comprises 1172 residues: Protein diaphanous homolog 3 (1172 aa).

Residues 1–15 (MEKHRARALGRDSKA) are compositionally biased toward basic and acidic residues. The segment at 1–36 (MEKHRARALGRDSKASRRKGLPSAPPAGPYELGEKR) is disordered. The Nuclear localization signal motif lies at 16–39 (SRRKGLPSAPPAGPYELGEKRPKL). A Phosphothreonine modification is found at T47. S56 carries the phosphoserine modification. The disordered stretch occupies residues 57–96 (IRIPKGSKKERPPLPQLKTVSGSSDYSSVSSETMENNPKS). Positions 77-87 (SGSSDYSSVSS) are enriched in low complexity. The GBD/FH3 domain occupies 94 to 456 (PKSLSENEVL…QIVLHRDGID (363 aa)). The residue at position 155 (S155) is a Phosphoserine. Residues 493-530 (CKKFEKECTDHQETQAQLQKKEAKINELQAELQAFKSQ) are a coiled coil. The interval 535-586 (PPGTKIPLQTSAKGEPGPSAFPPAPPALGAGVPPPPPPPPPPPPPLPGMAMP) is disordered. The region spanning 541–611 (PLQTSAKGEP…GQNFIPLNLP (71 aa)) is the FH1 domain. A compositionally biased stretch (pro residues) spans 553–581 (SAFPPAPPALGAGVPPPPPPPPPPPPPLP). The 399-residue stretch at 616 to 1014 (PKKEFKPEIS…EKRARIAKER (399 aa)) folds into the FH2 domain. The region spanning 1037 to 1067 (DETGVMDSLLEALQSGAAFRDRRKRTPKLKD) is the DAD domain. Residues S1073 and S1158 each carry the phosphoserine modification. The short motif at 1163–1172 (EALLARLRAL) is the Nuclear export signal element.

Belongs to the formin homology family. Diaphanous subfamily. Ubiquitinated. As to expression, expressed in testis. Present in Sertoli cells (at protein level).

It is found in the cytoplasm. The protein resides in the nucleus. In terms of biological role, actin nucleation and elongation factor required for the assembly of F-actin structures, such as actin cables and stress fibers. Required for cytokinesis, stress fiber formation and transcriptional activation of the serum response factor. Binds to GTP-bound form of Rho and to profilin: acts in a Rho-dependent manner to recruit profilin to the membrane, where it promotes actin polymerization. DFR proteins couple Rho and Src tyrosine kinase during signaling and the regulation of actin dynamics. Also acts as an actin nucleation and elongation factor in the nucleus by promoting nuclear actin polymerization inside the nucleus to drive serum-dependent SRF-MRTFA activity. This chain is Protein diaphanous homolog 3, found in Rattus norvegicus (Rat).